A 101-amino-acid chain; its full sequence is Large ribosomal subunit protein uL24 (101 aa).

Belongs to the universal ribosomal protein uL24 family. As to quaternary structure, part of the 50S ribosomal subunit.

Functionally, one of two assembly initiator proteins, it binds directly to the 5'-end of the 23S rRNA, where it nucleates assembly of the 50S subunit. In terms of biological role, one of the proteins that surrounds the polypeptide exit tunnel on the outside of the subunit. The polypeptide is Large ribosomal subunit protein uL24 (Streptococcus mutans serotype c (strain ATCC 700610 / UA159)).